The following is a 374-amino-acid chain: Pectate lyase 3 (374 aa).

An N-terminal signal peptide occupies residues 1–22; sequence MKYLLPSTAAGLLLLAAQPTMA. Cys-93 and Cys-176 form a disulfide bridge. Residues Asp-150, Asp-152, Glu-187, and Asp-191 each coordinate Ca(2+). Residue Arg-239 is part of the active site. An intrachain disulfide couples Cys-350 to Cys-373.

The protein belongs to the polysaccharide lyase 1 family. PLADES subfamily. Requires Ca(2+) as cofactor.

The protein localises to the secreted. The catalysed reaction is Eliminative cleavage of (1-&gt;4)-alpha-D-galacturonan to give oligosaccharides with 4-deoxy-alpha-D-galact-4-enuronosyl groups at their non-reducing ends.. Its pathway is glycan metabolism; pectin degradation; 2-dehydro-3-deoxy-D-gluconate from pectin: step 2/5. Involved in maceration and soft-rotting of plant tissue. This is Pectate lyase 3 (pel3) from Pectobacterium atrosepticum (strain SCRI 1043 / ATCC BAA-672) (Erwinia carotovora subsp. atroseptica).